Here is a 333-residue protein sequence, read N- to C-terminus: Holliday junction branch migration complex subunit RuvB (333 aa).

The interval 1 to 182 (MEERLVSGEV…FGVISRLEYY (182 aa)) is large ATPase domain (RuvB-L). ATP-binding positions include Leu-21, Arg-22, Gly-63, Lys-66, Thr-67, Thr-68, 129 to 131 (EDY), Arg-172, Tyr-182, and Arg-219. A Mg(2+)-binding site is contributed by Thr-67. A small ATPAse domain (RuvB-S) region spans residues 183 to 253 (HVDQLAQIIE…LAVEALERLQ (71 aa)). The tract at residues 256–333 (RLGLDQIDHK…THLGMEVPKR (78 aa)) is head domain (RuvB-H). DNA is bound by residues Arg-311 and Arg-316.

It belongs to the RuvB family. In terms of assembly, homohexamer. Forms an RuvA(8)-RuvB(12)-Holliday junction (HJ) complex. HJ DNA is sandwiched between 2 RuvA tetramers; dsDNA enters through RuvA and exits via RuvB. An RuvB hexamer assembles on each DNA strand where it exits the tetramer. Each RuvB hexamer is contacted by two RuvA subunits (via domain III) on 2 adjacent RuvB subunits; this complex drives branch migration. In the full resolvosome a probable DNA-RuvA(4)-RuvB(12)-RuvC(2) complex forms which resolves the HJ.

It is found in the cytoplasm. It catalyses the reaction ATP + H2O = ADP + phosphate + H(+). The RuvA-RuvB-RuvC complex processes Holliday junction (HJ) DNA during genetic recombination and DNA repair, while the RuvA-RuvB complex plays an important role in the rescue of blocked DNA replication forks via replication fork reversal (RFR). RuvA specifically binds to HJ cruciform DNA, conferring on it an open structure. The RuvB hexamer acts as an ATP-dependent pump, pulling dsDNA into and through the RuvAB complex. RuvB forms 2 homohexamers on either side of HJ DNA bound by 1 or 2 RuvA tetramers; 4 subunits per hexamer contact DNA at a time. Coordinated motions by a converter formed by DNA-disengaged RuvB subunits stimulates ATP hydrolysis and nucleotide exchange. Immobilization of the converter enables RuvB to convert the ATP-contained energy into a lever motion, pulling 2 nucleotides of DNA out of the RuvA tetramer per ATP hydrolyzed, thus driving DNA branch migration. The RuvB motors rotate together with the DNA substrate, which together with the progressing nucleotide cycle form the mechanistic basis for DNA recombination by continuous HJ branch migration. Branch migration allows RuvC to scan DNA until it finds its consensus sequence, where it cleaves and resolves cruciform DNA. The chain is Holliday junction branch migration complex subunit RuvB from Geobacillus kaustophilus (strain HTA426).